Consider the following 119-residue polypeptide: Large ribosomal subunit protein uL18 (119 aa).

Positions 1 to 20 (MISKPDKNKTRQKRHTRVRG) are disordered. The span at 10–20 (TRQKRHTRVRG) shows a compositional bias: basic residues.

This sequence belongs to the universal ribosomal protein uL18 family. In terms of assembly, part of the 50S ribosomal subunit; part of the 5S rRNA/L5/L18/L25 subcomplex. Contacts the 5S and 23S rRNAs.

In terms of biological role, this is one of the proteins that bind and probably mediate the attachment of the 5S RNA into the large ribosomal subunit, where it forms part of the central protuberance. The protein is Large ribosomal subunit protein uL18 of Latilactobacillus sakei subsp. sakei (strain 23K) (Lactobacillus sakei subsp. sakei).